Consider the following 219-residue polypeptide: PKHD-type hydroxylase AM1_3707 (219 aa).

The region spanning 78–172 (SIHTLLFSRY…RLVAVGWVQS (95 aa)) is the Fe2OG dioxygenase domain. Residues His-96, Asp-98, and His-153 each coordinate Fe cation. A 2-oxoglutarate-binding site is contributed by Arg-163.

The cofactor is Fe(2+). Requires L-ascorbate as cofactor.

The polypeptide is PKHD-type hydroxylase AM1_3707 (Acaryochloris marina (strain MBIC 11017)).